The following is a 115-amino-acid chain: Large ribosomal subunit protein uL22 (115 aa).

The protein belongs to the universal ribosomal protein uL22 family. As to quaternary structure, part of the 50S ribosomal subunit.

Functionally, this protein binds specifically to 23S rRNA; its binding is stimulated by other ribosomal proteins, e.g. L4, L17, and L20. It is important during the early stages of 50S assembly. It makes multiple contacts with different domains of the 23S rRNA in the assembled 50S subunit and ribosome. In terms of biological role, the globular domain of the protein is located near the polypeptide exit tunnel on the outside of the subunit, while an extended beta-hairpin is found that lines the wall of the exit tunnel in the center of the 70S ribosome. The chain is Large ribosomal subunit protein uL22 from Enterococcus faecalis (strain ATCC 700802 / V583).